The sequence spans 408 residues: Peptidase T (408 aa).

A Zn(2+)-binding site is contributed by H78. D80 is an active-site residue. D141 serves as a coordination point for Zn(2+). E175 functions as the Proton acceptor in the catalytic mechanism. The Zn(2+) site is built by E176, D198, and H380.

This sequence belongs to the peptidase M20B family. The cofactor is Zn(2+).

It localises to the cytoplasm. It catalyses the reaction Release of the N-terminal residue from a tripeptide.. Its function is as follows. Cleaves the N-terminal amino acid of tripeptides. This is Peptidase T from Clostridium botulinum (strain Okra / Type B1).